We begin with the raw amino-acid sequence, 157 residues long: Frd operon probable iron-sulfur subunit A (157 aa).

3 4Fe-4S ferredoxin-type domains span residues 24–55, 56–85, and 100–133; these read KGFSISTAVVCHQCEDAPCANVCPNGAIIHNK, DYYYVDQDKCIGCKTCVLACPYGTMEVVSR, and FKAEANKCDLCHHRAEGPACVEVCPTQALVCIDR. [4Fe-4S] cluster is bound by residues cysteine 34, cysteine 37, cysteine 42, cysteine 46, cysteine 65, cysteine 68, cysteine 71, cysteine 75, cysteine 107, cysteine 110, cysteine 119, and cysteine 123.

This chain is Frd operon probable iron-sulfur subunit A, found in Proteus vulgaris.